Here is a 409-residue protein sequence, read N- to C-terminus: MLEHIRISFQSIFSHKLRSILTMLGVIIGIAAIIAIVSMLKGQSEQLKQSMIGMGNNAINVVYQPSGGEEESGGPQVSYASAPPVAEETVKAIKSDPMVKGLSLYYLSEGASVFHLTNVSYPQVYGVDDDYFDMFPIRITEGRKLTENDLNSTHQVVMINEAVRDELFPDGEALHKSIEMNGVPFKVVGVFKEKNQQESMFEGDYANPVLYVPKKVWPLIEGFDAPTQIAVQADSSEHIQEAGVMAADLLNQGLSEAELEKAEYSVMDLQEIAQEVESFNQSFALLLGGIASISLLVGGIGVMNIMLVSVTERTREIGIKKALGAKRRVILFQFLTEAVVLTSIGGILGVLAGFGIAKLLTVIFPMPFIVSIPAVVGALIFSMAVGIIFGLLPSIKASKLQPVDALRYE.

4 helical membrane passes run 20 to 40 (ILTM…VSML), 283 to 303 (FALL…IGVM), 344 to 364 (IGGI…TVIF), and 372 to 392 (IPAV…FGLL).

This sequence belongs to the ABC-4 integral membrane protein family.

The protein resides in the cell membrane. This is an uncharacterized protein from Bacillus subtilis (strain 168).